The sequence spans 222 residues: 7-cyano-7-deazaguanine synthase (222 aa).

7–17 (LSGGMDSAVAT) lines the ATP pocket. Residues C188, C196, C199, and C202 each coordinate Zn(2+).

Belongs to the QueC family. It depends on Zn(2+) as a cofactor.

The enzyme catalyses 7-carboxy-7-deazaguanine + NH4(+) + ATP = 7-cyano-7-deazaguanine + ADP + phosphate + H2O + H(+). It functions in the pathway purine metabolism; 7-cyano-7-deazaguanine biosynthesis. Catalyzes the ATP-dependent conversion of 7-carboxy-7-deazaguanine (CDG) to 7-cyano-7-deazaguanine (preQ(0)). This is 7-cyano-7-deazaguanine synthase from Methanothermobacter thermautotrophicus (strain ATCC 29096 / DSM 1053 / JCM 10044 / NBRC 100330 / Delta H) (Methanobacterium thermoautotrophicum).